A 752-amino-acid chain; its full sequence is Multifunctional tryptophan biosynthesis protein (752 aa).

The Glutamine amidotransferase type-1 domain occupies 3 to 202; it reads FTLLIDNYDS…IQMKGGKWGG (200 aa). An L-glutamine-binding site is contributed by 58-60; the sequence is GPG. C86 acts as the Nucleophile; for GATase activity in catalysis. L-glutamine is bound at residue 136 to 137; it reads SL. Active-site for GATase activity residues include H176 and E178. The indole-3-glycerol phosphate synthase stretch occupies residues 231–495; sequence ILNRIHAQRL…DTKAFLRSLI (265 aa). Positions 509–752 are N-(5'-phosphoribosyl)anthranilate isomerase; it reads LVKICGIRST…VEAFVKAVRG (244 aa).

The catalysed reaction is N-(5-phospho-beta-D-ribosyl)anthranilate = 1-(2-carboxyphenylamino)-1-deoxy-D-ribulose 5-phosphate. It catalyses the reaction 1-(2-carboxyphenylamino)-1-deoxy-D-ribulose 5-phosphate + H(+) = (1S,2R)-1-C-(indol-3-yl)glycerol 3-phosphate + CO2 + H2O. It carries out the reaction chorismate + L-glutamine = anthranilate + pyruvate + L-glutamate + H(+). The protein operates within amino-acid biosynthesis; L-tryptophan biosynthesis; L-tryptophan from chorismate: step 1/5. It functions in the pathway amino-acid biosynthesis; L-tryptophan biosynthesis; L-tryptophan from chorismate: step 3/5. It participates in amino-acid biosynthesis; L-tryptophan biosynthesis; L-tryptophan from chorismate: step 4/5. In terms of biological role, trifunctional enzyme bearing the Gln amidotransferase (GATase) domain of anthranilate synthase, indole-glycerolphosphate synthase, and phosphoribosylanthranilate isomerase activities. This Cryptococcus neoformans var. neoformans serotype D (strain JEC21 / ATCC MYA-565) (Filobasidiella neoformans) protein is Multifunctional tryptophan biosynthesis protein (TRP1).